The chain runs to 396 residues: Elongation factor Tu (396 aa).

The 197-residue stretch at 10-206 (KPHVNVGTIG…ALDSYIPDPE (197 aa)) folds into the tr-type G domain. Positions 19-26 (GHVDHGKT) are G1. 19 to 26 (GHVDHGKT) contacts GTP. Position 26 (Thr-26) interacts with Mg(2+). The segment at 60 to 64 (GITIN) is G2. A G3 region spans residues 81–84 (DCPG). GTP contacts are provided by residues 81–85 (DCPGH) and 136–139 (NKCD). The segment at 136–139 (NKCD) is G4. A G5 region spans residues 174–176 (SAL).

The protein belongs to the TRAFAC class translation factor GTPase superfamily. Classic translation factor GTPase family. EF-Tu/EF-1A subfamily. In terms of assembly, monomer.

It localises to the cytoplasm. The enzyme catalyses GTP + H2O = GDP + phosphate + H(+). In terms of biological role, GTP hydrolase that promotes the GTP-dependent binding of aminoacyl-tRNA to the A-site of ribosomes during protein biosynthesis. In Dechloromonas aromatica (strain RCB), this protein is Elongation factor Tu.